Reading from the N-terminus, the 1314-residue chain is Phosphoribosylformylglycinamidine synthase (1314 aa).

Residues 307–318 and A674 contribute to the ATP site; that span reads GAATGAGGEIRD. Mg(2+) is bound by residues D675, E714, N718, and D880. An ATP-binding site is contributed by S882. A Glutamine amidotransferase type-1 domain is found at 1063–1314; that stretch reads IAILREQGVN…LFAGARKALG (252 aa). C1156 acts as the Nucleophile in catalysis. Catalysis depends on residues H1279 and E1281.

It in the N-terminal section; belongs to the FGAMS family. Monomer.

The protein resides in the cytoplasm. It carries out the reaction N(2)-formyl-N(1)-(5-phospho-beta-D-ribosyl)glycinamide + L-glutamine + ATP + H2O = 2-formamido-N(1)-(5-O-phospho-beta-D-ribosyl)acetamidine + L-glutamate + ADP + phosphate + H(+). It participates in purine metabolism; IMP biosynthesis via de novo pathway; 5-amino-1-(5-phospho-D-ribosyl)imidazole from N(2)-formyl-N(1)-(5-phospho-D-ribosyl)glycinamide: step 1/2. Phosphoribosylformylglycinamidine synthase involved in the purines biosynthetic pathway. Catalyzes the ATP-dependent conversion of formylglycinamide ribonucleotide (FGAR) and glutamine to yield formylglycinamidine ribonucleotide (FGAM) and glutamate. This is Phosphoribosylformylglycinamidine synthase from Neisseria gonorrhoeae (strain ATCC 700825 / FA 1090).